The following is a 78-amino-acid chain: Large ribosomal subunit protein bL28 (78 aa).

Belongs to the bacterial ribosomal protein bL28 family.

The chain is Large ribosomal subunit protein bL28 from Synechococcus sp. (strain CC9311).